Here is a 273-residue protein sequence, read N- to C-terminus: Flagellin FljN (273 aa).

It belongs to the bacterial flagellin family. In C.crescentus, the flagellar filament is composed of multiple flagellins of 29 kDa; 27 kDa and 25 kDa.

It localises to the secreted. The protein resides in the bacterial flagellum. Flagellin is the subunit protein which polymerizes to form the filaments of bacterial flagella. In Caulobacter vibrioides (strain ATCC 19089 / CIP 103742 / CB 15) (Caulobacter crescentus), this protein is Flagellin FljN (fljN).